We begin with the raw amino-acid sequence, 656 residues long: DNA mismatch repair protein MutL (656 aa).

It belongs to the DNA mismatch repair MutL/HexB family.

Functionally, this protein is involved in the repair of mismatches in DNA. It is required for dam-dependent methyl-directed DNA mismatch repair. May act as a 'molecular matchmaker', a protein that promotes the formation of a stable complex between two or more DNA-binding proteins in an ATP-dependent manner without itself being part of a final effector complex. The polypeptide is DNA mismatch repair protein MutL (Lactococcus lactis subsp. lactis (strain IL1403) (Streptococcus lactis)).